Here is a 229-residue protein sequence, read N- to C-terminus: Clathrin light chain (229 aa).

Disordered regions lie at residues 1 to 24 (MSQF…DSKN) and 76 to 132 (EMQA…KLRE). The span at 107 to 132 (EPVRKWKEDQMKRIQERDESSKKLRE) shows a compositional bias: basic and acidic residues. Ser-229 carries the phosphoserine modification.

It belongs to the clathrin light chain family. In terms of assembly, clathrin coats are formed from molecules containing 3 heavy chains and 3 light chains.

The protein resides in the cytoplasmic vesicle membrane. It is found in the membrane. It localises to the coated pit. Functionally, clathrin is the major protein of the polyhedral coat of coated pits and vesicles. The protein is Clathrin light chain (clc1) of Schizosaccharomyces pombe (strain 972 / ATCC 24843) (Fission yeast).